The following is a 121-amino-acid chain: Large ribosomal subunit protein uL14 (121 aa).

Belongs to the universal ribosomal protein uL14 family. Part of the 50S ribosomal subunit. Forms a cluster with proteins L3 and L19. In the 70S ribosome, L14 and L19 interact and together make contacts with the 16S rRNA in bridges B5 and B8.

Its function is as follows. Binds to 23S rRNA. Forms part of two intersubunit bridges in the 70S ribosome. The polypeptide is Large ribosomal subunit protein uL14 (Synechococcus sp. (strain CC9605)).